The sequence spans 291 residues: ATP synthase gamma chain (291 aa).

The protein belongs to the ATPase gamma chain family. As to quaternary structure, F-type ATPases have 2 components, CF(1) - the catalytic core - and CF(0) - the membrane proton channel. CF(1) has five subunits: alpha(3), beta(3), gamma(1), delta(1), epsilon(1). CF(0) has three main subunits: a, b and c.

Its subcellular location is the cell inner membrane. Produces ATP from ADP in the presence of a proton gradient across the membrane. The gamma chain is believed to be important in regulating ATPase activity and the flow of protons through the CF(0) complex. This chain is ATP synthase gamma chain, found in Burkholderia pseudomallei (strain 1106a).